The chain runs to 345 residues: uncharacterized protein (345 aa).

Disordered stretches follow at residues 1–24 (MGLE…ENRK) and 296–345 (MTAH…LNES). Over residues 304–323 (SDYDNDDDTDGIINETDYEL) the composition is skewed to acidic residues. Polar residues predominate over residues 324 to 345 (DTSQSEFATLTTSSNKSILNES).

This is an uncharacterized protein from Schizosaccharomyces pombe (strain 972 / ATCC 24843) (Fission yeast).